Reading from the N-terminus, the 339-residue chain is Glycerol-3-phosphate dehydrogenase [NAD(P)+] (339 aa).

The NADPH site is built by S15, Y16, H36, and K110. 3 residues coordinate sn-glycerol 3-phosphate: K110, G139, and T141. NADPH is bound at residue A143. Sn-glycerol 3-phosphate-binding residues include K195, D248, S258, R259, and N260. The active-site Proton acceptor is the K195. R259 provides a ligand contact to NADPH. V283 and E285 together coordinate NADPH.

Belongs to the NAD-dependent glycerol-3-phosphate dehydrogenase family.

The protein localises to the cytoplasm. It catalyses the reaction sn-glycerol 3-phosphate + NAD(+) = dihydroxyacetone phosphate + NADH + H(+). The enzyme catalyses sn-glycerol 3-phosphate + NADP(+) = dihydroxyacetone phosphate + NADPH + H(+). It functions in the pathway membrane lipid metabolism; glycerophospholipid metabolism. In terms of biological role, catalyzes the reduction of the glycolytic intermediate dihydroxyacetone phosphate (DHAP) to sn-glycerol 3-phosphate (G3P), the key precursor for phospholipid synthesis. This is Glycerol-3-phosphate dehydrogenase [NAD(P)+] from Yersinia pseudotuberculosis serotype O:1b (strain IP 31758).